The sequence spans 483 residues: ATP-dependent RNA helicase DDX25 (483 aa).

The Q motif signature appears at 97–125 (KSFEELHLKNELLRGIYAMGFNRPSKIQE). Residues 130–300 (MMLADPPQNL…ERIVPDPNII (171 aa)) form the Helicase ATP-binding domain. 143-150 (SQSGTGKT) is a binding site for ATP. The short motif at 247 to 250 (DEAD) is the DEAD box element. The Helicase C-terminal domain occupies 311 to 478 (NIQQFYDQCE…KLNSMDMDEM (168 aa)).

The protein belongs to the DEAD box helicase family. As to expression, an mRNA component of germ plasm. Localizes to the granulo-fibrillar material (GFM) of the mitochondrial cloud in stage I oocytes. Associated, at a low level, with the periphery of mature germinal granules in later stage oocytes. Localizes to the vegetal cortex in stage II oocytes and segregates with germ plasm during early embryogenesis. In adults, expression is restricted to the ovary and, at a lower level, to spermatogonia, spermatocytes and spermatids of the testis.

The protein localises to the cytoplasm. It is found in the nucleus. The catalysed reaction is ATP + H2O = ADP + phosphate + H(+). ATP-dependent RNA helicase. The chain is ATP-dependent RNA helicase DDX25 from Xenopus laevis (African clawed frog).